Consider the following 549-residue polypeptide: GATA-type transcription factor sreA (549 aa).

A disordered region spans residues 40–100 (AQAGREHPQD…TSPKSQKDTS (61 aa)). 2 stretches are compositionally biased toward basic and acidic residues: residues 43–72 (GREH…HEGE) and 86–97 (HHVEKTSPKSQK). The GATA-type 1 zinc-finger motif lies at 106-130 (CSNCGTKSTPLWRRSPTGAMICNAC). Residues 141–174 (RPTKRNRTQASPEAYHPQNQSVGSQPDPAVTGSE) are disordered. The tract at residues 180–198 (CPGGGNCNGTGGAEGCDGC) is cystein-rich region (CRR). Positions 223–244 (GNSDAVPSPEAEAPARNSGQPE) are disordered. A GATA-type 2 zinc finger spans residues 251-275 (CQNCGTTVTPLWRRDENGHPICNAC). Disordered regions lie at residues 306-332 (RENS…PATL), 375-459 (NSGA…RLSS), and 482-535 (LGRQ…MREQ). Positions 309–331 (SPTAATHSSHGSSASPEASSPAT) are enriched in low complexity. Positions 383–396 (HHPPPPRLLEPGHP) are enriched in pro residues. Over residues 485–497 (QQQSQPHHPQSSP) the composition is skewed to low complexity. The span at 498–515 (LAPTQAASQSLPGVSNMD) shows a compositional bias: polar residues. Residues 511–549 (VSNMDNHVEDRRAKLQREAEEMREQLRAKERELAELAGQ) are a coiled coil. Positions 516 to 535 (NHVEDRRAKLQREAEEMREQ) are enriched in basic and acidic residues.

The protein resides in the nucleus. In terms of biological role, GATA-type transcription repressor that regulates iron- acquisition genes through specific binding GATA sequence elements of target promoters. Iron acquisition regulation is critical for survival under both iron-limiting conditions (to acquire essential iron) and iron-replete conditions (to limit iron toxicity). SreA targets include genes encoding a number of key iron-regulated factors such as those involved in siderophore biosynthesis. This chain is GATA-type transcription factor sreA, found in Emericella nidulans (strain FGSC A4 / ATCC 38163 / CBS 112.46 / NRRL 194 / M139) (Aspergillus nidulans).